A 380-amino-acid chain; its full sequence is Putative 8-amino-7-oxononanoate synthase (380 aa).

A substrate-binding site is contributed by Arg18. Pyridoxal 5'-phosphate is bound at residue 105-106; the sequence is GY. His130 is a substrate binding site. Residues Ser178, 204–207, and 235–238 each bind pyridoxal 5'-phosphate; these read DEAH and TFGK. Lys238 is modified (N6-(pyridoxal phosphate)lysine). Residue Thr352 participates in substrate binding.

This sequence belongs to the class-II pyridoxal-phosphate-dependent aminotransferase family. BioF subfamily. Homodimer. The cofactor is pyridoxal 5'-phosphate.

The enzyme catalyses 6-carboxyhexanoyl-[ACP] + L-alanine + H(+) = (8S)-8-amino-7-oxononanoate + holo-[ACP] + CO2. Its pathway is cofactor biosynthesis; biotin biosynthesis. Catalyzes the decarboxylative condensation of pimeloyl-[acyl-carrier protein] and L-alanine to produce 8-amino-7-oxononanoate (AON), [acyl-carrier protein], and carbon dioxide. This chain is Putative 8-amino-7-oxononanoate synthase (bioF), found in Glaesserella parasuis serovar 5 (strain SH0165) (Haemophilus parasuis).